A 436-amino-acid chain; its full sequence is Probable cinnamyl alcohol dehydrogenase 8B (436 aa).

C120 contributes to the Zn(2+) binding site. T122 lines the NADP(+) pocket. H142, E143, C173, C176, C179, C187, and C236 together coordinate Zn(2+). NADP(+) contacts are provided by residues T240, 261–266, 284–289, T324, G348, and 371–373; these read GLGGLG, STSPGK, and NCV.

This sequence belongs to the zinc-containing alcohol dehydrogenase family. As to quaternary structure, homodimer. Zn(2+) serves as cofactor.

The catalysed reaction is (E)-cinnamyl alcohol + NADP(+) = (E)-cinnamaldehyde + NADPH + H(+). It catalyses the reaction (E)-coniferol + NADP(+) = (E)-coniferaldehyde + NADPH + H(+). The enzyme catalyses (E)-sinapyl alcohol + NADP(+) = (E)-sinapaldehyde + NADPH + H(+). It carries out the reaction (E)-4-coumaroyl alcohol + NADP(+) = (E)-4-coumaraldehyde + NADPH + H(+). The catalysed reaction is (E)-caffeyl alcohol + NADP(+) = (E)-caffeyl aldehyde + NADPH + H(+). It participates in aromatic compound metabolism; phenylpropanoid biosynthesis. Involved in lignin biosynthesis. Catalyzes the final step specific for the production of lignin monomers. Catalyzes the NADPH-dependent reduction of coniferaldehyde, 5-hydroxyconiferaldehyde, sinapaldehyde, 4-coumaraldehyde and caffeyl aldehyde to their respective alcohols. This chain is Probable cinnamyl alcohol dehydrogenase 8B, found in Oryza sativa subsp. japonica (Rice).